We begin with the raw amino-acid sequence, 666 residues long: MDKCSVGGLELTEQTPALLGNMAMATSLMDIGDSFGHPACPLVSRSRNSPVEDDDDVVFIESIQPPSVSAPAIADQRNFILASSKNEKPQGNYSVIPPPSRDLASQKGNISETIVIDDEEDIETNGGAEKNSSCFIEWGLPGTKNKTKDLDFSTSSLSRSKTKTGVRPFNPGRMNVAGDLFQNGEFATHHSPDSWISQSASFPRNQKQPGVDSLSPVALLRKQNFQPTAQQQLTNPAKITCANCKKPLQKGQTAYQRKGSAHLFCCTTCLSSFSHKRTQNTRSVICKKFASTKKADVVLPVESSRSFQEFCSTSCVSPCENNRNLKKGVFNKSRCTICSKLAEIRHEVSVNNVTHKLCSNHCFNKYRLANGLIMNCCEHCGEYMPSKSTGNNILVIGGQQKRFCCQSCINEYKQMMETKSKKLTASENRKRNAVREENEKQFCGLSSTLLKKIDGITEKKEKTSELHLSVECGTDTLLIKENVNLPPSSASAIADTFQEQLEEKNFEDSIVPVVLSADPGTWPRILNIKQRDTLVENVPPQVRNFNFPKDNTGRKFSETYYTRILPNGEKTTRSWLLYSTSKDSVFCLYCRLFGEGKNQLKNENGCKDWQHLSHILSKHEESEMHINNSVKYSKLKSDLKKNKAIDAAERRLYENEKNDGALLLYT.

Glycyl lysine isopeptide (Lys-Gly) (interchain with G-Cter in SUMO2) cross-links involve residues lysine 85, lysine 88, lysine 146, and lysine 163. The segment at 87–106 is disordered; it reads EKPQGNYSVIPPPSRDLASQ. A disordered region spans residues 191-212; it reads SPDSWISQSASFPRNQKQPGVD. A compositionally biased stretch (polar residues) spans 194-208; it reads SWISQSASFPRNQKQ. Lysine 222 is covalently cross-linked (Glycyl lysine isopeptide (Lys-Gly) (interchain with G-Cter in SUMO2)). MYM-type zinc fingers lie at residues 262 to 296, 308 to 348, 355 to 390, and 401 to 428; these read HLFCCTTCLSSFSHKRTQNTRSVICKKFASTKKAD, QEFC…RHEV, HKLCSNHCFNKYRLANGLIMNCCEHCGEYMPSKSTG, and KRFCCQSCINEYKQMMETKSKKLTASEN. Glycyl lysine isopeptide (Lys-Gly) (interchain with G-Cter in SUMO2) cross-links involve residues lysine 440, lysine 452, lysine 459, and lysine 549.

Interacts (via N-terminal 120 amino acid region) with ETV5 (via C-terminal).

It localises to the nucleus. In terms of biological role, functions as a transcriptional regulator. This Macaca fascicularis (Crab-eating macaque) protein is Zinc finger MYM-type protein 5 (ZMYM5).